The following is a 178-amino-acid chain: uncharacterized protein (178 aa).

5 helical membrane-spanning segments follow: residues 1–21 (MISI…YGGG), 47–67 (MLAL…AYVG), 75–95 (GFLI…IVLL), 117–137 (VIAV…IKAI), and 158–178 (MHPA…IPYL).

The protein belongs to the chromate ion transporter (CHR) (TC 2.A.51) family.

It localises to the cell membrane. This is an uncharacterized protein from Bacillus subtilis (strain 168).